A 541-amino-acid polypeptide reads, in one-letter code: Formimidoyltransferase-cyclodeaminase (541 aa).

The tract at residues 1 to 181 is formiminotransferase N-subdomain; that stretch reads MSQLVECVPN…GATVTGARKF (181 aa). Catalysis depends on His82, which acts as the For formimidoyltransferase activity. Residue 163-172 participates in folate binding; it reads GPSSFVPSWG. The formiminotransferase C-subdomain stretch occupies residues 182–326; that stretch reads LIAFNINLLS…PKERIIEYLV (145 aa). The linker stretch occupies residues 327–334; the sequence is PDSGPEQS. Residues 335-541 form a cyclodeaminase/cyclohydrolase region; it reads LLDTSLRGFV…VLGSLEARKE (207 aa). Asp412 functions as the For cyclodeaminase activity in the catalytic mechanism. Ser520 is modified (phosphoserine).

In the C-terminal section; belongs to the cyclodeaminase/cyclohydrolase family. This sequence in the N-terminal section; belongs to the formiminotransferase family. Homooctamer, including four polyglutamate binding sites. The subunits are arranged as a tetramer of dimers, and form a planar ring-shaped structure.

The protein localises to the cytoplasm. It is found in the cytoskeleton. The protein resides in the microtubule organizing center. Its subcellular location is the centrosome. It localises to the centriole. The protein localises to the golgi apparatus. The enzyme catalyses 5-formimidoyltetrahydrofolate + L-glutamate = N-formimidoyl-L-glutamate + (6S)-5,6,7,8-tetrahydrofolate. It catalyses the reaction (6S)-5-formyl-5,6,7,8-tetrahydrofolate + L-glutamate = N-formyl-L-glutamate + (6S)-5,6,7,8-tetrahydrofolate + H(+). It carries out the reaction 5-formimidoyltetrahydrofolate + 2 H(+) = (6R)-5,10-methenyltetrahydrofolate + NH4(+). Its pathway is amino-acid degradation; L-histidine degradation into L-glutamate; L-glutamate from N-formimidoyl-L-glutamate (transferase route): step 1/1. It participates in one-carbon metabolism; tetrahydrofolate interconversion. In terms of biological role, folate-dependent enzyme, that displays both transferase and deaminase activity. Serves to channel one-carbon units from formiminoglutamate to the folate pool. Its function is as follows. Binds and promotes bundling of vimentin filaments originating from the Golgi. In Mus musculus (Mouse), this protein is Formimidoyltransferase-cyclodeaminase (Ftcd).